The primary structure comprises 410 residues: Lissencephaly-1 homolog A (410 aa).

The LisH domain maps to 7 to 39; the sequence is QRDELNRAIADYLRSNGYEEAYSTFKKEAELDM. Positions 56 to 82 form a coiled coil; it reads TSVIRLQKKVMELESKLNEAKEEITLG. 7 WD repeats span residues 106 to 147, 148 to 187, 190 to 229, 232 to 271, 274 to 333, 336 to 375, and 378 to 410; these read GHRS…RTLK, GHTD…CIRT, GHDH…CVKT, GHRE…CKAE, EHEH…CLMT, GHDN…CMKT, and AHEH…WECR.

It belongs to the WD repeat LIS1/nudF family. In terms of assembly, can self-associate. Component of the cytosolic PAF-AH (I) heterotetrameric enzyme, which is composed of PAFAH1B1 (beta), PAFAH1B2 (alpha2) and PAFAH1B3 (alpha1) subunits. The catalytic activity of the enzyme resides in the alpha1 (PAFAH1B3) and alpha2 (PAFAH1B2) subunits, whereas the beta subunit (PAFAH1B1) has regulatory activity. Trimer formation is not essential for the catalytic activity. Interacts with dynein, dynactin, nde1 and ndel1.

It localises to the cytoplasm. Its subcellular location is the cytoskeleton. The protein resides in the microtubule organizing center. It is found in the centrosome. Its function is as follows. Regulatory subunit (beta subunit) of the cytosolic type I platelet-activating factor (PAF) acetylhydrolase (PAF-AH (I)), an enzyme that catalyzes the hydrolyze of the acetyl group at the sn-2 position of PAF and its analogs and participates in PAF inactivation. Regulates the PAF-AH (I) activity in a catalytic dimer composition-dependent manner. Positively regulates the activity of the minus-end directed microtubule motor protein dynein. May enhance dynein-mediated microtubule sliding by targeting dynein to the microtubule plus end. Required for several dynein- and microtubule-dependent processes such as the maintenance of Golgi integrity, the peripheral transport of microtubule fragments and the coupling of the nucleus and centrosome. May be required for proliferation of neuronal precursors and neuronal migration. This chain is Lissencephaly-1 homolog A (pafah1b1-1), found in Salmo salar (Atlantic salmon).